We begin with the raw amino-acid sequence, 881 residues long: Probable inorganic carbon transporter subunit DabA (881 aa).

The Zn(2+) site is built by Cys-399, Asp-401, His-585, and Cys-600.

Belongs to the inorganic carbon transporter (TC 9.A.2) DabA family. As to quaternary structure, forms a complex with DabB. Zn(2+) is required as a cofactor.

It is found in the cell membrane. In terms of biological role, part of an energy-coupled inorganic carbon pump. This chain is Probable inorganic carbon transporter subunit DabA, found in Geobacillus sp. (strain WCH70).